Consider the following 444-residue polypeptide: Tol-Pal system protein TolB (444 aa).

The N-terminal stretch at 1–26 is a signal peptide; that stretch reads MNLFRSLAPMGLALALLLPAAAPALA. Residues 287–310 are compositionally biased toward polar residues; it reads ASGTRRQLTNSPSIETAPSYSPDG. Residues 287–311 are disordered; the sequence is ASGTRRQLTNSPSIETAPSYSPDGS.

Belongs to the TolB family. In terms of assembly, the Tol-Pal system is composed of five core proteins: the inner membrane proteins TolA, TolQ and TolR, the periplasmic protein TolB and the outer membrane protein Pal. They form a network linking the inner and outer membranes and the peptidoglycan layer.

The protein localises to the periplasm. Its function is as follows. Part of the Tol-Pal system, which plays a role in outer membrane invagination during cell division and is important for maintaining outer membrane integrity. The protein is Tol-Pal system protein TolB of Cereibacter sphaeroides (strain ATCC 17025 / ATH 2.4.3) (Rhodobacter sphaeroides).